Reading from the N-terminus, the 174-residue chain is ATP synthase subunit b, organellar chromatophore (174 aa).

A helical transmembrane segment spans residues 26 to 46 (LINLIIVIGVLFTFLRGFLGE).

Belongs to the ATPase B chain family. In terms of assembly, F-type ATPases have 2 components, F(1) - the catalytic core - and F(0) - the membrane proton channel. F(1) has five subunits: alpha(3), beta(3), gamma(1), delta(1), epsilon(1). F(0) has four main subunits: a(1), b(1), b'(1) and c(10-14). The alpha and beta chains form an alternating ring which encloses part of the gamma chain. F(1) is attached to F(0) by a central stalk formed by the gamma and epsilon chains, while a peripheral stalk is formed by the delta, b and b' chains.

The protein resides in the plastid. Its subcellular location is the organellar chromatophore thylakoid membrane. In terms of biological role, f(1)F(0) ATP synthase produces ATP from ADP in the presence of a proton or sodium gradient. F-type ATPases consist of two structural domains, F(1) containing the extramembraneous catalytic core and F(0) containing the membrane proton channel, linked together by a central stalk and a peripheral stalk. During catalysis, ATP synthesis in the catalytic domain of F(1) is coupled via a rotary mechanism of the central stalk subunits to proton translocation. Functionally, component of the F(0) channel, it forms part of the peripheral stalk, linking F(1) to F(0). This Paulinella chromatophora protein is ATP synthase subunit b, organellar chromatophore.